The following is a 212-amino-acid chain: uncharacterized protein (212 aa).

A signal peptide spans 1–20; sequence MKNLTIGAIFLIFFAVSAFA.

It localises to the virion. This is an uncharacterized protein from Acanthamoeba polyphaga (Amoeba).